The sequence spans 368 residues: Flagellar P-ring protein (368 aa).

A signal peptide spans 1-24 (MNSIFRKIVFAAFLLLALPQFALA).

This sequence belongs to the FlgI family. The basal body constitutes a major portion of the flagellar organelle and consists of four rings (L,P,S, and M) mounted on a central rod.

The protein localises to the periplasm. The protein resides in the bacterial flagellum basal body. In terms of biological role, assembles around the rod to form the L-ring and probably protects the motor/basal body from shearing forces during rotation. In Geotalea uraniireducens (strain Rf4) (Geobacter uraniireducens), this protein is Flagellar P-ring protein.